A 271-amino-acid polypeptide reads, in one-letter code: Murein DD-endopeptidase MepH (271 aa).

The signal sequence occupies residues 1–27; sequence MARINRISITLCALLFTTLPLTPMAHA. The disordered stretch occupies residues 27-102; the sequence is ASKQARESSA…KHAVNKTASA (76 aa). The segment covering 55 to 64 has biased composition (basic residues); it reads KTQKTAKKAA. Residues 65–86 are compositionally biased toward low complexity; the sequence is SKSTTKSKTASSVKKSSITASK. Positions 138–265 constitute a NlpC/P60 domain; that stretch reads QKATKVAMNK…RHYVGARRVM (128 aa). The Nucleophile role is filled by Cys-169. The active-site Proton acceptor is the His-224. Gln-236 is a catalytic residue.

The protein belongs to the peptidase C40 family.

It functions in the pathway cell wall biogenesis; cell wall polysaccharide biosynthesis. A murein DD-endopeptidase with specificity for D-Ala-meso-diaminopimelic acid (mDAP) cross-links. Its role is probably to cleave D-Ala-mDAP cross-links to allow insertion of new glycans and thus cell wall expansion. Functionally redundant with MepM and MepH. Partially suppresses an mepS disruption mutant. The protein is Murein DD-endopeptidase MepH (mepH) of Escherichia coli (strain K12).